The sequence spans 164 residues: Peptidyl-prolyl cis-trans isomerase A-like 4H (164 aa).

The PPIase cyclophilin-type domain occupies 7–163 (FFDITVDGKP…KKITIADCGQ (157 aa)). N-linked (GlcNAc...) asparagine glycans are attached at residues N71 and N108.

This sequence belongs to the cyclophilin-type PPIase family. PPIase A subfamily.

Its subcellular location is the cytoplasm. It carries out the reaction [protein]-peptidylproline (omega=180) = [protein]-peptidylproline (omega=0). PPIases accelerate the folding of proteins. It catalyzes the cis-trans isomerization of proline imidic peptide bonds in oligopeptides. In Homo sapiens (Human), this protein is Peptidyl-prolyl cis-trans isomerase A-like 4H.